The sequence spans 748 residues: MELQRAQRNLKFLQNEDYVNVTDQTNLNGESQNAYSLGMETQVPEMQFSLSSDDDSIGTQVKSVTAQKSPMTQETTKNDTERNKDVDKSCNPVSTSHPDLGGSNIEENIFINTQIQSRLDDAEEETNLKLKLEKFKYSFKSSNADDTHSNANVTAKRRPAIRKANSKLKTKPKTKRDPKIIKNITDFNINNYERSRTASLLKQLSGKHKKVLDIIKTQNEGNSDKPPRARNNKGEKATFDTYSEQEWKDIMKLLLQKFPQSEETDLNEVQKFLYGSEKSSNSLDNQESSQQRLWTASQLPPELPDEAIQPEQEERIRDTQSAVNFLSLSQVMDDKSEIMKDEESIIISRGDSTSSQEYGNGLEPQQPVGNVVGEDIELAVGTRINAFSLTDYKACKPMSVEVSRRCENSTDNDYDNISIVSDTTDETSTLFPLDQYRYVFIENDERPPLATDTIGSTQFFTPNTSPLDGIIDLTQESFKAVRSLISPLKVENNKTGVTSQASNQVQVPATRTPTIIPQKNLTTTLKTEEEKNNIGSSIRVKLLQESVVKLNPKLVKHNFYRVEANDSEEEETEFDDQFCIADIQLVDSSKISTKDSTQNPTTSNDIIDTSAASSIASPEKFCEIMMSQSMKELRQSLKTVGLKPMRTKVEIIQSLQTASQILSTANPDNKGEHGGVANFSKIEIFDHLTELIEAFPDFLERIYTFEPIPLNELIEKLFSAEPFVSQIDEMTIREWADVQGICLRNDKK.

Residues K62 to T75 show a composition bias toward polar residues. The interval K62–N104 is disordered. T72 is subject to Phosphothreonine; by ATR and ATM. Positions T76–K88 are enriched in basic and acidic residues. T113 bears the Phosphothreonine; by ATR and ATM mark. Disordered stretches follow at residues I215–K236 and E277–L303. A compositionally biased stretch (basic and acidic residues) spans N222 to K236. Positions E277 to Q298 are enriched in polar residues. S289 bears the Phosphoserine; by ATR and ATM mark. The residue at position 319 (T319) is a Phosphothreonine; by ATR and ATM. Phosphoserine; by ATR and ATM is present on residues S329 and S355. The segment covering I591–T602 has biased composition (polar residues). Positions I591 to S610 are disordered.

It belongs to the SLX4 family. In terms of assembly, forms a heterodimer with SLX1. Interacts with RAD1; catalytic subunit of the RAD1-RAD10 endonuclease. Interacts with RTT107. In terms of processing, phosphorylated by ATR (MEC1) and ATM (TEL1) upon DNA damage. This appears to be required for the function with the RAD1-RAD10 endonuclease.

It is found in the nucleus. Its subcellular location is the cytoplasm. Regulatory subunit that interacts with and increases the activity of different structure-specific endonucleases. Has several distinct roles in protecting genome stability by resolving diverse forms of deleterious DNA structures. Component of the SLX1-SLX4 structure-specific endonuclease that resolves DNA secondary structures generated during DNA repair and recombination. Has endonuclease activity towards branched DNA substrates, introducing single-strand cuts in duplex DNA close to junctions with ss-DNA. Has a preference for simple Y, 5'-flap and replication fork-like structures. It cleaves the strand bearing the 5'-non-homologous arm at the branch site junction and generates ligatable, nicked products from the 5'-flap or replication fork substrates. Plays a critical role in maintaining the integrity of the ribosomal DNA (rDNA) loci, where it has a role in re-starting stalled replication forks. Has Holliday junction resolvase activity in vitro. Interacts with the structure-specific RAD1-RAD10 endonuclease and promotes RAD1-RAD10-dependent 3'-non-homologous tail removal (NHTR) during repair of double-strand breaks by single-strand annealing. SLX4 also promotes recovery from DNA-alkylation-induced replisome stalling during DNA replication by facilitating the error-free mode of lesion bypass. This does not require SLX1 or RAD1-RAD10, but probably RTT107. This chain is Structure-specific endonuclease subunit SLX4, found in Saccharomyces cerevisiae (strain RM11-1a) (Baker's yeast).